Consider the following 264-residue polypeptide: Indole-3-glycerol phosphate synthase (264 aa).

It belongs to the TrpC family.

The enzyme catalyses 1-(2-carboxyphenylamino)-1-deoxy-D-ribulose 5-phosphate + H(+) = (1S,2R)-1-C-(indol-3-yl)glycerol 3-phosphate + CO2 + H2O. The protein operates within amino-acid biosynthesis; L-tryptophan biosynthesis; L-tryptophan from chorismate: step 4/5. This is Indole-3-glycerol phosphate synthase from Xylella fastidiosa (strain M23).